The sequence spans 143 residues: Large ribosomal subunit protein uL11 (143 aa).

This sequence belongs to the universal ribosomal protein uL11 family. Part of the ribosomal stalk of the 50S ribosomal subunit. Interacts with L10 and the large rRNA to form the base of the stalk. L10 forms an elongated spine to which L12 dimers bind in a sequential fashion forming a multimeric L10(L12)X complex. One or more lysine residues are methylated.

In terms of biological role, forms part of the ribosomal stalk which helps the ribosome interact with GTP-bound translation factors. This is Large ribosomal subunit protein uL11 from Borreliella afzelii (strain PKo) (Borrelia afzelii).